The sequence spans 115 residues: Succinate dehydrogenase hydrophobic membrane anchor subunit (115 aa).

Residues 1-15 are Cytoplasmic-facing; it reads MVSNASALGRNGVHD. Residues 16–36 form a helical membrane-spanning segment; it reads FILVRATAIVLTLYIIYMVGF. Residues 37 to 58 are Periplasmic-facing; that stretch reads FATSGELTYEVWIGFFASAFTK. A helical transmembrane segment spans residues 59 to 80; that stretch reads VFTLLALFSILIHAWIGMWQVL. H71 contacts heme. The Cytoplasmic portion of the chain corresponds to 81–90; sequence TDYVKPLALR. Y83 is an a ubiquinone binding site. A helical transmembrane segment spans residues 91-115; the sequence is LMLQLVIVVALVVYVIYGFVVVWGV.

In terms of assembly, part of an enzyme complex containing four subunits: a flavoprotein, an iron-sulfur protein, plus two membrane-anchoring proteins, SdhC and SdhD. The complex can form homotrimers. Heme serves as cofactor.

It localises to the cell inner membrane. It functions in the pathway carbohydrate metabolism; tricarboxylic acid cycle. In terms of biological role, membrane-anchoring subunit of succinate dehydrogenase (SDH). This is Succinate dehydrogenase hydrophobic membrane anchor subunit (sdhD) from Escherichia coli O6:H1 (strain CFT073 / ATCC 700928 / UPEC).